The following is a 118-amino-acid chain: MKHLWFFLLLVAAPRWVLSQVQLQESGPGLVKPSQTLSLTCTVSGGSISSGGYYWSWIRQHPGKGLEWIGYIYYSGSTYYNPSLKSLVTISVDTSKNQFSLKLSSVTAADTAVYYCAR.

The first 19 residues, 1-19 (MKHLWFFLLLVAAPRWVLS), serve as a signal peptide directing secretion. The framework-1 stretch occupies residues 20–44 (QVQLQESGPGLVKPSQTLSLTCTVS). Positions 20–118 (QVQLQESGPG…ADTAVYYCAR (99 aa)) constitute an Ig-like domain. A disulfide bridge links Cys-41 with Cys-116. The segment at 45 to 54 (GGSISSGGYY) is complementarity-determining-1. Positions 55 to 71 (WSWIRQHPGKGLEWIGY) are framework-2. The tract at residues 72-78 (IYYSGST) is complementarity-determining-2. Residues 79–116 (YYNPSLKSLVTISVDTSKNQFSLKLSSVTAADTAVYYC) are framework-3. The tract at residues 117–118 (AR) is complementarity-determining-3.

As to quaternary structure, immunoglobulins are composed of two identical heavy chains and two identical light chains; disulfide-linked.

It localises to the secreted. The protein localises to the cell membrane. Its function is as follows. V region of the variable domain of immunoglobulin heavy chains that participates in the antigen recognition. Immunoglobulins, also known as antibodies, are membrane-bound or secreted glycoproteins produced by B lymphocytes. In the recognition phase of humoral immunity, the membrane-bound immunoglobulins serve as receptors which, upon binding of a specific antigen, trigger the clonal expansion and differentiation of B lymphocytes into immunoglobulins-secreting plasma cells. Secreted immunoglobulins mediate the effector phase of humoral immunity, which results in the elimination of bound antigens. The antigen binding site is formed by the variable domain of one heavy chain, together with that of its associated light chain. Thus, each immunoglobulin has two antigen binding sites with remarkable affinity for a particular antigen. The variable domains are assembled by a process called V-(D)-J rearrangement and can then be subjected to somatic hypermutations which, after exposure to antigen and selection, allow affinity maturation for a particular antigen. In Homo sapiens (Human), this protein is Immunoglobulin heavy variable 4-31.